Here is a 160-residue protein sequence, read N- to C-terminus: Ribosomal RNA large subunit methyltransferase H (160 aa).

S-adenosyl-L-methionine is bound by residues leucine 76 and glycine 108.

It belongs to the RNA methyltransferase RlmH family. Homodimer.

The protein localises to the cytoplasm. It carries out the reaction pseudouridine(1915) in 23S rRNA + S-adenosyl-L-methionine = N(3)-methylpseudouridine(1915) in 23S rRNA + S-adenosyl-L-homocysteine + H(+). Specifically methylates the pseudouridine at position 1915 (m3Psi1915) in 23S rRNA. This chain is Ribosomal RNA large subunit methyltransferase H, found in Rhodopseudomonas palustris (strain HaA2).